The sequence spans 192 residues: Cytochrome c oxidase assembly protein CtaG (192 aa).

Over 1 to 9 (MSLSPHQKT) the chain is Cytoplasmic. Residues 10–30 (AGWLVGVVVVMGAASFAAVPF) traverse the membrane as a helical; Signal-anchor for type II membrane protein segment. Residues 31-192 (YDWFCRVTGF…AARPAGIDVN (162 aa)) lie on the Periplasmic side of the membrane.

It belongs to the COX11/CtaG family.

It is found in the cell inner membrane. Exerts its effect at some terminal stage of cytochrome c oxidase synthesis, probably by being involved in the insertion of the copper B into subunit I. This Cereibacter sphaeroides (strain ATCC 17025 / ATH 2.4.3) (Rhodobacter sphaeroides) protein is Cytochrome c oxidase assembly protein CtaG.